A 350-amino-acid chain; its full sequence is Geranylgeranyl diphosphate synthase (350 aa).

Isopentenyl diphosphate is bound by residues K70, R73, and H102. Residues D109 and D113 each contribute to the Mg(2+) site. A DDXXD motif motif is present at residues 109–113 (DDVMD). Residue R119 participates in isopentenyl diphosphate binding. Residues 240 to 244 (DDLIG) carry the DDXXD motif motif.

Belongs to the FPP/GGPP synthase family. Requires Mg(2+) as cofactor.

It carries out the reaction isopentenyl diphosphate + (2E,6E)-farnesyl diphosphate = (2E,6E,10E)-geranylgeranyl diphosphate + diphosphate. The protein operates within isoprenoid biosynthesis; geranylgeranyl diphosphate biosynthesis; geranylgeranyl diphosphate from farnesyl diphosphate and isopentenyl diphosphate: step 1/1. Its function is as follows. Catalyzes the condensation of isopentenyl pyrophosphate (IPP) with (2E,6E)-farnesyl diphosphate (E,E-FPP) to yield geranylgeranyl diphosphate (GGPP). The chain is Geranylgeranyl diphosphate synthase from Mycobacterium tuberculosis (strain ATCC 25618 / H37Rv).